The chain runs to 383 residues: Protein KES1 (383 aa).

Positions 317–339 (FETASKDKARIENAQRQKRKDEA) are enriched in basic and acidic residues. A disordered region spans residues 317 to 346 (FETASKDKARIENAQRQKRKDEAAAGTPHQ).

The protein belongs to the OSBP family.

Functionally, lipid transporter involved in lipid countertransport between the Golgi complex and membranes of the endoplasmic reticulum: specifically exchanges sterol with phosphatidylinositol 4-phosphate (PI4P), delivering sterol to the Golgi in exchange for PI4P, which is degraded by the SAC1 phosphatase in the endoplasmic reticulum. This chain is Protein KES1 (KES1), found in Mycosarcoma maydis (Corn smut fungus).